The following is a 143-amino-acid chain: Large ribosomal subunit protein uL15 (143 aa).

Basic residues-rich tracts occupy residues 1–13 (MIRKSKKITKQRG) and 23–38 (KKHRGAGHRGGRGNAG). The tract at residues 1-38 (MIRKSKKITKQRGSRTCGYGEAKKHRGAGHRGGRGNAG) is disordered.

Belongs to the universal ribosomal protein uL15 family. Part of the 50S ribosomal subunit.

Its function is as follows. Binds to the 23S rRNA. This is Large ribosomal subunit protein uL15 from Methanococcus vannielii.